A 430-amino-acid chain; its full sequence is Endo-beta-1,4-glucanase celB (430 aa).

Positions 1 to 16 (MALLLSLSLLATTISA) are cleaved as a signal peptide. Asn-43 and Asn-153 each carry an N-linked (GlcNAc...) asparagine glycan. Glu-216 acts as the Nucleophile in catalysis. Glu-221 functions as the Proton donor in the catalytic mechanism. An N-linked (GlcNAc...) asparagine glycan is attached at Asn-395.

Belongs to the glycosyl hydrolase 7 (cellulase C) family.

It is found in the secreted. The enzyme catalyses Endohydrolysis of (1-&gt;4)-beta-D-glucosidic linkages in cellulose, lichenin and cereal beta-D-glucans.. Functionally, has endoglucanase activity on substrates containing beta-1,4 glycosidic bonds, like in carboxymethylcellulose (CMC), hydroxyethylcellulose (HEC) and beta-glucan. Involved in the degradation of complex natural cellulosic substrates. The polypeptide is Endo-beta-1,4-glucanase celB (celB) (Emericella nidulans (strain FGSC A4 / ATCC 38163 / CBS 112.46 / NRRL 194 / M139) (Aspergillus nidulans)).